Consider the following 152-residue polypeptide: MESTLIILAVLVVAVLGRANTVALAASLLLVLKLLQVDQYIFPFIEKGGTFWGLVLLIAAILVPLARGTVTLRDLGHVFLSWVGLSAFILSLITTYMSGQGLQYLTVQGHSEVMPALILGAVIAAAFLGGVPVGPFITSGVLALLVKLIAKL.

Helical transmembrane passes span 5–25 (LIIL…VALA), 41–61 (IFPF…IAAI), 75–95 (LGHV…LITT), and 117–137 (LILG…GPFI).

It belongs to the UPF0756 family.

The protein localises to the cell membrane. The protein is UPF0756 membrane protein Moth_1009 of Moorella thermoacetica (strain ATCC 39073 / JCM 9320).